The following is a 406-amino-acid chain: Testis-specific Y-encoded-like protein 4 (406 aa).

4 disordered regions span residues 1 to 63, 81 to 121, 161 to 189, and 387 to 406; these read MNGV…EHCG, GLED…AKPK, EAGA…TRPR, and VRVP…FQSG. Residues 8–20 show a composition bias toward polar residues; the sequence is NELSLANTTTPSH. Low complexity predominate over residues 93–102; the sequence is DAPSAPVAAD. A compositionally biased stretch (basic and acidic residues) spans 167-188; the sequence is QEKKGLQKEKKVAGGGKEETRP.

This sequence belongs to the nucleosome assembly protein (NAP) family.

The polypeptide is Testis-specific Y-encoded-like protein 4 (Tspyl4) (Mus musculus (Mouse)).